The following is a 291-amino-acid chain: Dihydroorotate dehydrogenase A (fumarate) (291 aa).

FMN-binding positions include serine 18 and lysine 42–serine 43. Substrate is bound by residues lysine 42, asparagine 66–leucine 70, and asparagine 126. Asparagine 126 is a binding site for FMN. Cysteine 129 (nucleophile) is an active-site residue. Positions 164 and 190 each coordinate FMN. Asparagine 191 to threonine 192 is a binding site for substrate. FMN-binding positions include glycine 216, glycine 242–glycine 243, and glycine 264–serine 265.

The protein belongs to the dihydroorotate dehydrogenase family. Type 1 subfamily. In terms of assembly, homodimer. Requires FMN as cofactor.

The protein localises to the cytoplasm. The enzyme catalyses (S)-dihydroorotate + fumarate = orotate + succinate. Its pathway is pyrimidine metabolism; UMP biosynthesis via de novo pathway. In terms of biological role, catalyzes the conversion of dihydroorotate to orotate with fumarate as the electron acceptor. This chain is Dihydroorotate dehydrogenase A (fumarate) (pyrD), found in Lacticaseibacillus paracasei (strain ATCC 334 / BCRC 17002 / CCUG 31169 / CIP 107868 / KCTC 3260 / NRRL B-441) (Lactobacillus paracasei).